The chain runs to 124 residues: Small ribosomal subunit protein uS12 (124 aa).

Residues 1 to 32 (MPTISQLIRHGRQKQKKRTKSPALKSSPQRRG) are disordered. Residues 9 to 20 (RHGRQKQKKRTK) show a composition bias toward basic residues. At aspartate 89 the chain carries 3-methylthioaspartic acid.

It belongs to the universal ribosomal protein uS12 family. Part of the 30S ribosomal subunit. Contacts proteins S8 and S17. May interact with IF1 in the 30S initiation complex.

Its function is as follows. With S4 and S5 plays an important role in translational accuracy. Interacts with and stabilizes bases of the 16S rRNA that are involved in tRNA selection in the A site and with the mRNA backbone. Located at the interface of the 30S and 50S subunits, it traverses the body of the 30S subunit contacting proteins on the other side and probably holding the rRNA structure together. The combined cluster of proteins S8, S12 and S17 appears to hold together the shoulder and platform of the 30S subunit. The protein is Small ribosomal subunit protein uS12 of Leptospira borgpetersenii serovar Hardjo-bovis (strain JB197).